The following is a 277-amino-acid chain: Protein G1-like2 (277 aa).

The span at 1–16 shows a compositional bias: gly residues; that stretch reads MQGGGGGDSSGGGGGE. 3 disordered regions span residues 1–28, 141–203, and 225–245; these read MQGGGGGDSSGGGGGEAPRPSRYESQKR, RGIA…GHFF, and HQVSNAGNGGNTNTNTNTNTG. Basic and acidic residues predominate over residues 19–28; that stretch reads RPSRYESQKR. One can recognise an ALOG domain in the interval 22 to 149; the sequence is RYESQKRRDW…ARGIAYEKKR (128 aa). The Nuclear localization signal signature appears at 147–151; the sequence is KKRRK. The span at 154–177 shows a compositional bias: low complexity; it reads PTSSSSSQAAAAAAAATSPASPAA. Pro residues predominate over residues 178–187; it reads SPTPPPPPPT.

The protein belongs to the plant homeotic and developmental regulators ALOG protein family.

The protein localises to the nucleus. Probable transcription regulator that acts as a developmental regulator by promoting cell growth in response to light. This Oryza sativa subsp. japonica (Rice) protein is Protein G1-like2 (G1L2).